Consider the following 113-residue polypeptide: Ribonuclease P protein component (113 aa).

The span at 1–10 shows a compositional bias: basic residues; sequence MLPTRHRMRT. Positions 1 to 23 are disordered; that stretch reads MLPTRHRMRTSAHFSTTVRSGAR.

It belongs to the RnpA family. In terms of assembly, consists of a catalytic RNA component (M1 or rnpB) and a protein subunit.

It carries out the reaction Endonucleolytic cleavage of RNA, removing 5'-extranucleotides from tRNA precursor.. RNaseP catalyzes the removal of the 5'-leader sequence from pre-tRNA to produce the mature 5'-terminus. It can also cleave other RNA substrates such as 4.5S RNA. The protein component plays an auxiliary but essential role in vivo by binding to the 5'-leader sequence and broadening the substrate specificity of the ribozyme. The protein is Ribonuclease P protein component of Kocuria rhizophila (strain ATCC 9341 / DSM 348 / NBRC 103217 / DC2201).